The primary structure comprises 366 residues: E3 ubiquitin-protein ligase SINA-like 1 (366 aa).

A disordered region spans residues 1–37; the sequence is MVKGTNAEQALAREEASSSRPKRQRVPSIVEEEGENG. The RING-type; degenerate zinc-finger motif lies at 56–92; it reads CPICCNALTIPIFQCDKGHIACSSCCTNVSNKCPYCS. Positions 106-354 are SBD; that stretch reads VVEAFIVRCP…KGTYICIRSL (249 aa). The SIAH-type; degenerate zinc-finger motif lies at 109–232; that stretch reads AFIVRCPIVA…LYSHYAANHK (124 aa). The Zn(2+) site is built by Cys-114, Cys-186, His-198, Cys-202, Cys-209, Cys-214, His-226, and His-231.

Belongs to the SINA (Seven in absentia) family.

The enzyme catalyses S-ubiquitinyl-[E2 ubiquitin-conjugating enzyme]-L-cysteine + [acceptor protein]-L-lysine = [E2 ubiquitin-conjugating enzyme]-L-cysteine + N(6)-ubiquitinyl-[acceptor protein]-L-lysine.. Its pathway is protein modification; protein ubiquitination. E3 ubiquitin-protein ligase that mediates ubiquitination and subsequent proteasomal degradation of target proteins. E3 ubiquitin ligases accept ubiquitin from an E2 ubiquitin-conjugating enzyme in the form of a thioester and then directly transfers the ubiquitin to targeted substrates. It probably triggers the ubiquitin-mediated degradation of different substrates. This is E3 ubiquitin-protein ligase SINA-like 1 from Arabidopsis thaliana (Mouse-ear cress).